A 205-amino-acid chain; its full sequence is Guanylate kinase (205 aa).

The Guanylate kinase-like domain maps to proline 17–leucine 195. Glycine 24–serine 31 contributes to the ATP binding site.

Belongs to the guanylate kinase family.

The protein localises to the cytoplasm. It carries out the reaction GMP + ATP = GDP + ADP. Essential for recycling GMP and indirectly, cGMP. In Streptomyces kasugaensis, this protein is Guanylate kinase.